Reading from the N-terminus, the 310-residue chain is Zinc finger protein unc-98 (310 aa).

Residues glycine 73–serine 84 are compositionally biased toward polar residues. Residues glycine 73–serine 102 form a disordered region. 2 consecutive C2H2-type zinc fingers follow at residues tyrosine 113–histidine 135 and tyrosine 141–histidine 163. Residues tyrosine 169–histidine 188 form a C2H2-type 3; degenerate zinc finger. The interaction with myo-3 stretch occupies residues alanine 198–phenylalanine 310. The C2H2-type 4 zinc-finger motif lies at tyrosine 246–histidine 268.

In terms of assembly, interacts with hum-6, mep-1, myo-3, unc-96 and unc-97/PINCH. Expressed in embryos from 1.5- to 2-fold stage in myofibrils. In larvae and adults, it is expressed in body wall muscle, and in addition, anal depressor muscle and vulval muscles. More specifically it is found in the thick filaments of muscle fibers.

Its subcellular location is the nucleus. The protein resides in the cytoplasm. Probable transcription factor required for muscle structure. Its dual subcellular localization suggests that it may function both as a muscle adhesion complex protein and as a transcription factor, or work together with transcription factors, to influence gene expression. Thought to act as a molecular bridge between unc-97 and myo-3 at the M-line of muscles, possibly in a signaling role. Plays a role in the formation of muscle connections, also called muscle arm extensions, between the body wall and the motor axons in the dorsal and ventral cord. The sequence is that of Zinc finger protein unc-98 (unc-98) from Caenorhabditis elegans.